We begin with the raw amino-acid sequence, 304 residues long: Glycine--tRNA ligase alpha subunit (304 aa).

This sequence belongs to the class-II aminoacyl-tRNA synthetase family. Tetramer of two alpha and two beta subunits.

It is found in the cytoplasm. The catalysed reaction is tRNA(Gly) + glycine + ATP = glycyl-tRNA(Gly) + AMP + diphosphate. The chain is Glycine--tRNA ligase alpha subunit from Pectobacterium carotovorum subsp. carotovorum (strain PC1).